Here is a 447-residue protein sequence, read N- to C-terminus: Phospholipase A(1) DAD1, chloroplastic (447 aa).

The N-terminal 46 residues, 1–46 (MRFSLSPVRPHSVVVPSLPKQDVVSYISGTTSNRQCRCVLTLPSPS), are a transit peptide targeting the chloroplast. The GXSXG motif lies at 293–297 (GHSLG). The active-site Acyl-ester intermediate is S295. Active-site charge relay system residues include D352 and H418.

The protein belongs to the AB hydrolase superfamily. Lipase family. Expressed in flower buds, but not in leaves or roots. Restricted to the stamen filaments immediately before flower opening.

The protein localises to the plastid. It is found in the chloroplast. The catalysed reaction is a 1,2-diacyl-sn-glycero-3-phosphocholine + H2O = a 2-acyl-sn-glycero-3-phosphocholine + a fatty acid + H(+). It catalyses the reaction 1-hexadecanoyl-2-(9Z,12Z-octadecadienoyl)-sn-glycero-3-phosphocholine + H2O = 2-(9Z,12Z-octadecadienoyl)-sn-glycero-3-phosphocholine + hexadecanoate + H(+). Sn-1-specific phospholipase that releases free fatty acids from phospholipids. Low activity on galactolipids and triacylglycerols. Catalyzes the initial step of jasmonic acid biosynthesis. Not essential for jasmonate biosynthesis after wounding or upon pathogen infection. This is Phospholipase A(1) DAD1, chloroplastic from Arabidopsis thaliana (Mouse-ear cress).